Reading from the N-terminus, the 417-residue chain is Serine hydroxymethyltransferase 2 (417 aa).

(6S)-5,6,7,8-tetrahydrofolate is bound by residues Leu121 and 125-127 (GHL). Lys230 is modified (N6-(pyridoxal phosphate)lysine). Position 355-357 (355-357 (SPF)) interacts with (6S)-5,6,7,8-tetrahydrofolate.

Belongs to the SHMT family. As to quaternary structure, homodimer. Requires pyridoxal 5'-phosphate as cofactor.

Its subcellular location is the cytoplasm. It catalyses the reaction (6R)-5,10-methylene-5,6,7,8-tetrahydrofolate + glycine + H2O = (6S)-5,6,7,8-tetrahydrofolate + L-serine. The protein operates within one-carbon metabolism; tetrahydrofolate interconversion. Its pathway is amino-acid biosynthesis; glycine biosynthesis; glycine from L-serine: step 1/1. Catalyzes the reversible interconversion of serine and glycine with tetrahydrofolate (THF) serving as the one-carbon carrier. This reaction serves as the major source of one-carbon groups required for the biosynthesis of purines, thymidylate, methionine, and other important biomolecules. Also exhibits THF-independent aldolase activity toward beta-hydroxyamino acids, producing glycine and aldehydes, via a retro-aldol mechanism. The chain is Serine hydroxymethyltransferase 2 from Pseudomonas syringae pv. syringae (strain B728a).